Reading from the N-terminus, the 100-residue chain is Enhancer of yellow 2 transcription factor (100 aa).

It belongs to the ENY2 family. Component of the nuclear pore complex (NPC)-associated AMEX complex (anchoring and mRNA export complex), composed of at least e(y)2 and xmas-2. Component of the SAGA transcription coactivator-HAT complexes, at least composed of Ada2b, e(y)2, Pcaf/Gcn5, Taf10 and Nipped-A/Trrap. Within the SAGA complex, e(y)2, Sgf11, and not/nonstop form an additional subcomplex of SAGA called the DUB module (deubiquitination module). Component of the THO complex, composed of at least e(y)2, HPR1, THO2, THOC5, THOC6 and THOC7. Interacts with e(y)1. Interacts with su(Hw) (via zinc fingers). Interacts with xmas-2; required for localization to the nuclear periphery. Interacts with the nuclear pore complex (NPC).

The protein localises to the nucleus. Its subcellular location is the nucleoplasm. It localises to the cytoplasm. In terms of biological role, involved in mRNA export coupled transcription activation by association with both the AMEX and the SAGA complexes. The SAGA complex is a multiprotein complex that activates transcription by remodeling chromatin and mediating histone acetylation and deubiquitination. Within the SAGA complex, participates in a subcomplex that specifically deubiquitinates histone H2B. The SAGA complex is recruited to specific gene promoters by activators, where it is required for transcription. Required for nuclear receptor-mediated transactivation. Involved in transcription elongation by recruiting the THO complex onto nascent mRNA. The AMEX complex functions in docking export-competent ribonucleoprotein particles (mRNPs) to the nuclear entrance of the nuclear pore complex (nuclear basket). AMEX participates in mRNA export and accurate chromatin positioning in the nucleus by tethering genes to the nuclear periphery. This Drosophila ananassae (Fruit fly) protein is Enhancer of yellow 2 transcription factor.